The sequence spans 98 residues: Signal peptidase complex subunit 1 (98 aa).

Residues 1–18 (MLDIQTHMDFAGQGKAER) are Cytoplasmic-facing. A helical membrane pass occupies residues 19–38 (WSRFIITFFGIVGLVYGAFV). Residues 39-42 (QQFS) are Lumenal-facing. A helical membrane pass occupies residues 43-65 (QTVYILGAGFVLSSLITIPPWPL). Residues 66-98 (YRRNALKWQKPIDTDAKSSSSESGDEGKKKKKQ) are Cytoplasmic-facing. Residues 78-98 (DTDAKSSSSESGDEGKKKKKQ) are disordered. A phosphoserine mark is found at Ser-84, Ser-85, Ser-86, and Ser-88.

Belongs to the SPCS1 family. Component of the signal peptidase complex (SPC) composed of a catalytic subunit twr/SEC11 and three accessory subunits Spase12/SPCS1, Spase25/SPCS2 and Spase22-23/SPCS3. The complex induces a local thinning of the ER membrane which is used to measure the length of the signal peptide (SP) h-region of protein substrates. This ensures the selectivity of the complex towards h-regions shorter than 18-20 amino acids.

The protein resides in the endoplasmic reticulum membrane. In terms of biological role, component of the signal peptidase complex (SPC) which catalyzes the cleavage of N-terminal signal sequences from nascent proteins as they are translocated into the lumen of the endoplasmic reticulum. Dispensable for SPC enzymatic activity. Functionally, (Microbial infection) Plays an important role in infection by flaviviruses such as West Nile virus and Dengue virus type 2. In Drosophila melanogaster (Fruit fly), this protein is Signal peptidase complex subunit 1 (Spase12).